The sequence spans 365 residues: tRNA(Met) cytidine acetate ligase (365 aa).

Residues 7 to 20 (IAEF…HKYL), G96, N152, and R175 contribute to the ATP site.

This sequence belongs to the TmcAL family.

It localises to the cytoplasm. It catalyses the reaction cytidine(34) in elongator tRNA(Met) + acetate + ATP = N(4)-acetylcytidine(34) in elongator tRNA(Met) + AMP + diphosphate. Functionally, catalyzes the formation of N(4)-acetylcytidine (ac(4)C) at the wobble position of elongator tRNA(Met), using acetate and ATP as substrates. First activates an acetate ion to form acetyladenylate (Ac-AMP) and then transfers the acetyl group to tRNA to form ac(4)C34. In Streptococcus pneumoniae serotype 4 (strain ATCC BAA-334 / TIGR4), this protein is tRNA(Met) cytidine acetate ligase.